The sequence spans 89 residues: Small ribosomal subunit protein bS20 (89 aa).

Residues 1–11 show a composition bias toward basic and acidic residues; the sequence is MANHKSAEKRN. The tract at residues 1–30 is disordered; that stretch reads MANHKSAEKRNRQNQVARLRNKSTRTAMKN.

The protein belongs to the bacterial ribosomal protein bS20 family.

Functionally, binds directly to 16S ribosomal RNA. The sequence is that of Small ribosomal subunit protein bS20 from Desulfotalea psychrophila (strain LSv54 / DSM 12343).